Here is a 434-residue protein sequence, read N- to C-terminus: Sodium/bile acid cotransporter 5 (434 aa).

The signal sequence occupies residues 1-18; it reads MSGKLFIILLLLVTPGEA. Over 19 to 129 the chain is Extracellular; the sequence is RKSFLRFLNI…VSVFRQTEDS (111 aa). Residues asparagine 73 and asparagine 96 are each glycosylated (N-linked (GlcNAc...) asparagine). The helical transmembrane segment at 130–150 threads the bilayer; sequence LFQEPIHVNSSVFLLVLLMIL. Over 151-172 the chain is Cytoplasmic; sequence LNKCAFGCKIELQVLQTVWKRP. A helical membrane pass occupies residues 173-193; it reads LPILLGAVTQFFLMPFCGFLL. At 194–195 the chain is on the extracellular side; it reads SQ. A helical transmembrane segment spans residues 196–216; that stretch reads ILGLSKAQAFGFVMTCTCPGG. Over 217-232 the chain is Cytoplasmic; that stretch reads GGGYLFALLLEGDVTL. A helical transmembrane segment spans residues 233–255; sequence AILMACTSTSLALIMMPVNSYLY. The Extracellular segment spans residues 256 to 268; sequence SCLLGLAGVFHVP. The chain crosses the membrane as a helical span at residues 269-289; that stretch reads VLKIVSTLLFILTPVSIGIVI. The Cytoplasmic segment spans residues 290–306; sequence KHRMPKKAVCLERVVQP. Residues 307–327 form a helical membrane-spanning segment; that stretch reads LSLTLMLVGVYLAFRMGLVFL. Topologically, residues 328–331 are extracellular; that stretch reads RMAN. A helical transmembrane segment spans residues 332 to 352; it reads LEVFLLGLLVPVLGFSFGYSF. At 353–365 the chain is on the cytoplasmic side; the sequence is AKVYLLPLPVCKT. Residues 366–386 form a helical membrane-spanning segment; it reads VAIESGMLNSFLALAIIQLSF. At 387-395 the chain is on the extracellular side; it reads PQSKAYEAS. Residues 396–416 form a helical membrane-spanning segment; it reads VAPFTVAMCSSCEMLLLLLVY. Residues 417-434 lie on the Cytoplasmic side of the membrane; that stretch reads KAKKRPLLSTENEKAPLV.

The protein belongs to the bile acid:sodium symporter (BASS) (TC 2.A.28) family.

The protein resides in the membrane. The polypeptide is Sodium/bile acid cotransporter 5 (Slc10a5) (Rattus norvegicus (Rat)).